A 386-amino-acid polypeptide reads, in one-letter code: Succinate--CoA ligase [ADP-forming] subunit beta (386 aa).

Residues 9-244 (KELLRSYGVP…ETEEDPREVE (236 aa)) form the ATP-grasp domain. ATP contacts are provided by residues Lys-46, 53–55 (GRG), Glu-99, Cys-102, and Glu-107. The Mg(2+) site is built by Asn-199 and Asp-213. Substrate contacts are provided by residues Asn-264 and 321–323 (GIM).

This sequence belongs to the succinate/malate CoA ligase beta subunit family. In terms of assembly, heterotetramer of two alpha and two beta subunits. Mg(2+) is required as a cofactor.

It carries out the reaction succinate + ATP + CoA = succinyl-CoA + ADP + phosphate. The enzyme catalyses GTP + succinate + CoA = succinyl-CoA + GDP + phosphate. It participates in carbohydrate metabolism; tricarboxylic acid cycle; succinate from succinyl-CoA (ligase route): step 1/1. Functionally, succinyl-CoA synthetase functions in the citric acid cycle (TCA), coupling the hydrolysis of succinyl-CoA to the synthesis of either ATP or GTP and thus represents the only step of substrate-level phosphorylation in the TCA. The beta subunit provides nucleotide specificity of the enzyme and binds the substrate succinate, while the binding sites for coenzyme A and phosphate are found in the alpha subunit. This chain is Succinate--CoA ligase [ADP-forming] subunit beta, found in Exiguobacterium sibiricum (strain DSM 17290 / CCUG 55495 / CIP 109462 / JCM 13490 / 255-15).